A 457-amino-acid chain; its full sequence is Glycoprotein endo-alpha-1,2-mannosidase-like protein (457 aa).

Residues 1–8 (MARRRRRA) lie on the Cytoplasmic side of the membrane. A helical; Signal-anchor for type II membrane protein membrane pass occupies residues 9 to 29 (CIALFLVLLFAFGTLMGLRTL). Residues 30-457 (KAPDGLPALG…FIKEKEQWLM (428 aa)) lie on the Lumenal side of the membrane. Positions 46-93 (PFERRPEGAPAPAARAPAAPAAPPPPPPPPRTADPGGSPGPAPAEAEP) are disordered. A compositionally biased stretch (low complexity) spans 53–64 (GAPAPAARAPAA). Residues 65–87 (PAAPPPPPPPPRTADPGGSPGPA) show a composition bias toward pro residues.

This sequence belongs to the glycosyl hydrolase 99 family.

The protein localises to the golgi apparatus membrane. The polypeptide is Glycoprotein endo-alpha-1,2-mannosidase-like protein (MANEAL) (Homo sapiens (Human)).